The following is a 552-amino-acid chain: Arginine--tRNA ligase (552 aa).

The 'HIGH' region signature appears at 123 to 133 (ANPTGPLTIGR).

It belongs to the class-I aminoacyl-tRNA synthetase family. Monomer.

The protein resides in the cytoplasm. It catalyses the reaction tRNA(Arg) + L-arginine + ATP = L-arginyl-tRNA(Arg) + AMP + diphosphate. This Chlorobium phaeovibrioides (strain DSM 265 / 1930) (Prosthecochloris vibrioformis (strain DSM 265)) protein is Arginine--tRNA ligase.